We begin with the raw amino-acid sequence, 275 residues long: Undecaprenyl-diphosphatase (275 aa).

The next 8 helical transmembrane spans lie at 2–22 (LDIF…FLPI), 43–63 (FINM…IVIY), 83–103 (WQIW…GLPL), 111–131 (MTSW…FIVL), 161–181 (VLSM…AMLI), 186–206 (YVAT…ASLL), 225–245 (ILLV…KFLL), and 255–275 (PFGW…LVFA).

The protein belongs to the UppP family.

Its subcellular location is the cell membrane. The enzyme catalyses di-trans,octa-cis-undecaprenyl diphosphate + H2O = di-trans,octa-cis-undecaprenyl phosphate + phosphate + H(+). Catalyzes the dephosphorylation of undecaprenyl diphosphate (UPP). Confers resistance to bacitracin. The chain is Undecaprenyl-diphosphatase from Lactobacillus delbrueckii subsp. bulgaricus (strain ATCC 11842 / DSM 20081 / BCRC 10696 / JCM 1002 / NBRC 13953 / NCIMB 11778 / NCTC 12712 / WDCM 00102 / Lb 14).